The primary structure comprises 241 residues: uncharacterized protein (241 aa).

The GGDEF domain occupies 84–216; the sequence is TVVSLVVCDL…APGPVVAGRD (133 aa). The interval 215–241 is disordered; sequence RDGEVVRLADSPPKSAHDRRRLRGNRP. The segment covering 231 to 241 has biased composition (basic residues); that stretch reads HDRRRLRGNRP.

This is an uncharacterized protein from Streptomyces griseus.